Here is a 617-residue protein sequence, read N- to C-terminus: Protein 4.1 (617 aa).

One can recognise an FERM domain in the interval 1-282; sequence MHCKVSLLDD…EHHTFFRLTS (282 aa). At tyrosine 13 the chain carries Phosphotyrosine. Position 169 is a phosphothreonine (threonine 169). Residues 308–401 form a disordered region; it reads TRQASALIDR…AEPEPSEAWK (94 aa). Residues serine 312, serine 331, and serine 333 each carry the phosphoserine modification. Residues 348 to 361 are compositionally biased toward low complexity; that stretch reads RPTSAPAIAPSPAA. Residues 387-396 are compositionally biased toward acidic residues; it reads APPEDAEPEP. Residues 401-466 are spectrin--actin-binding; that stretch reads KKKRERLDGE…WDKRLSTHSP (66 aa). Residue tyrosine 413 is modified to Phosphotyrosine; by EGFR. Phosphoserine occurs at positions 417, 427, 437, and 462. Serine 465 carries the phosphoserine; by CDK1 modification. The tract at residues 467-617 is C-terminal (CTD); that stretch reads FRTLNINGQI…VHQETEISEE (151 aa). Phosphothreonine occurs at positions 489 and 612.

Binds with a high affinity to glycophorin and with lower affinity to band III protein. Associates with the nuclear mitotic apparatus. Binds calmodulin, CPAP and DLG1. Also found to associate with contractile apparatus and tight junctions. Interacts with NUMA1; this interaction is negatively regulated by CDK1 during metaphase and promotes anaphase-specific localization of NUMA1 in symmetrically dividing cells. Interacts with ATP2B1; regulates small intestinal calcium absorption through regulation of membrane expression of ATP2B1. Post-translationally, phosphorylated at multiple sites by different protein kinases and each phosphorylation event selectively modulates the protein's functions. Phosphorylation on Tyr-413 reduces the ability of 4.1 to promote the assembly of the spectrin/actin/4.1 ternary complex.

Its subcellular location is the nucleus. It localises to the cytoplasm. The protein localises to the cytoskeleton. It is found in the cell cortex. Functionally, protein 4.1 is a major structural element of the erythrocyte membrane skeleton. It plays a key role in regulating membrane physical properties of mechanical stability and deformability by stabilizing spectrin-actin interaction. Recruits DLG1 to membranes. Required for dynein-dynactin complex and NUMA1 recruitment at the mitotic cell cortex during anaphase. In Bos taurus (Bovine), this protein is Protein 4.1.